Consider the following 73-residue polypeptide: MSFRRKKFCAFDAKNLQEIDYKDVNTLKDYIMESGRVVPSRITGTCAKHQRQISRAIKLARYLALLPYCDTHQ.

Belongs to the bacterial ribosomal protein bS18 family. In terms of assembly, part of the 30S ribosomal subunit. Forms a tight heterodimer with protein bS6.

Binds as a heterodimer with protein bS6 to the central domain of the 16S rRNA, where it helps stabilize the platform of the 30S subunit. In Coxiella burnetii (strain Dugway 5J108-111), this protein is Small ribosomal subunit protein bS18.